Here is a 180-residue protein sequence, read N- to C-terminus: ATP-dependent protease subunit HslV (180 aa).

Threonine 8 is a catalytic residue. Na(+)-binding residues include glycine 165, aspartate 168, and threonine 171.

This sequence belongs to the peptidase T1B family. HslV subfamily. A double ring-shaped homohexamer of HslV is capped on each side by a ring-shaped HslU homohexamer. The assembly of the HslU/HslV complex is dependent on binding of ATP.

The protein localises to the cytoplasm. The enzyme catalyses ATP-dependent cleavage of peptide bonds with broad specificity.. With respect to regulation, allosterically activated by HslU binding. Functionally, protease subunit of a proteasome-like degradation complex believed to be a general protein degrading machinery. The sequence is that of ATP-dependent protease subunit HslV from Lactiplantibacillus plantarum (strain ATCC BAA-793 / NCIMB 8826 / WCFS1) (Lactobacillus plantarum).